The primary structure comprises 170 residues: Sec-independent protein translocase protein TatB (170 aa).

The chain crosses the membrane as a helical span at residues 1-21; the sequence is MIDLGISKLALIGAVALIVIG.

Belongs to the TatB family. In terms of assembly, the Tat system comprises two distinct complexes: a TatABC complex, containing multiple copies of TatA, TatB and TatC subunits, and a separate TatA complex, containing only TatA subunits. Substrates initially bind to the TatABC complex, which probably triggers association of the separate TatA complex to form the active translocon.

It localises to the cell inner membrane. Functionally, part of the twin-arginine translocation (Tat) system that transports large folded proteins containing a characteristic twin-arginine motif in their signal peptide across membranes. Together with TatC, TatB is part of a receptor directly interacting with Tat signal peptides. TatB may form an oligomeric binding site that transiently accommodates folded Tat precursor proteins before their translocation. This Cupriavidus necator (strain ATCC 17699 / DSM 428 / KCTC 22496 / NCIMB 10442 / H16 / Stanier 337) (Ralstonia eutropha) protein is Sec-independent protein translocase protein TatB.